A 93-amino-acid polypeptide reads, in one-letter code: Large ribosomal subunit protein uL23cz/uL23cy (93 aa).

This sequence belongs to the universal ribosomal protein uL23 family. In terms of assembly, part of the 50S ribosomal subunit.

It localises to the plastid. The protein resides in the chloroplast. Its function is as follows. Binds to 23S rRNA. The protein is Large ribosomal subunit protein uL23cz/uL23cy (rpl23-A) of Lotus japonicus (Lotus corniculatus var. japonicus).